A 372-amino-acid chain; its full sequence is uncharacterized protein (372 aa).

The N-terminal stretch at 1-19 (MKIFFLFIILLGIIQLSNS) is a signal peptide. N-linked (GlcNAc...) asparagine glycosylation is present at asparagine 18. The 141-residue stretch at 20–160 (SSCNIDIAGD…IWTTKYSCAI (141 aa)) folds into the MRH domain. Cysteine 22 and cysteine 58 form a disulfide bridge. N-linked (GlcNAc...) asparagine glycosylation occurs at asparagine 59. Cysteine 128 and cysteine 158 are joined by a disulfide. A coiled-coil region spans residues 185–282 (NEILNEAQSN…VQFNDDIKLI (98 aa)). A disordered region spans residues 201 to 233 (KNEDLNNNNNNNNNNNNNNNNNNNNNNNNNKIN). The span at 206-230 (NNNNNNNNNNNNNNNNNNNNNNNNN) shows a compositional bias: low complexity.

Its subcellular location is the secreted. This is an uncharacterized protein from Dictyostelium discoideum (Social amoeba).